A 541-amino-acid chain; its full sequence is Membrane protein insertase YidC (541 aa).

A run of 6 helical transmembrane segments spans residues 6-26, 325-345, 349-369, 420-440, 457-477, and 500-520; these read NILL…WQAD, LVVD…LLMF, FVGN…GLLF, GGCL…WVLL, LSVQ…MFVM, and VIFT…WLVG.

The protein belongs to the OXA1/ALB3/YidC family. Type 1 subfamily. In terms of assembly, interacts with the Sec translocase complex via SecD. Specifically interacts with transmembrane segments of nascent integral membrane proteins during membrane integration.

It localises to the cell inner membrane. Functionally, required for the insertion and/or proper folding and/or complex formation of integral membrane proteins into the membrane. Involved in integration of membrane proteins that insert both dependently and independently of the Sec translocase complex, as well as at least some lipoproteins. Aids folding of multispanning membrane proteins. This is Membrane protein insertase YidC from Shewanella baltica (strain OS223).